We begin with the raw amino-acid sequence, 285 residues long: Nucleotide-binding protein Pfl01_0854 (285 aa).

8–15 (GRSGSGKS) contributes to the ATP binding site. 60–63 (DARN) lines the GTP pocket.

This sequence belongs to the RapZ-like family.

Displays ATPase and GTPase activities. The polypeptide is Nucleotide-binding protein Pfl01_0854 (Pseudomonas fluorescens (strain Pf0-1)).